The primary structure comprises 288 residues: MDVTAKYELIGLMAYPIRHSLSPEMQNKALEKAGLPYTYMAFEVDNTTFASAIEGLKALKMRGTGVSMPNKQLACEYVDELTPAAKLVGAINTIVNDDGYLRGYNTDGTGHIRAIKESGFDIRGKTMVLLGAGGAATAIGAQAAIEGIKEIKLFNRKDDFFEKAVAFAKRVNENTDCVVTVTDLADQHAFTEALASADILTNGTKVGMKPLENESLIGDVSLLRPELLVTECVYNPHMTKLLQQAQQAGCKTIDGYGMLLWQGAEQFELWTGKAFPLDYVKQVMGFTA.

2 residues coordinate substrate: Lys71 and Asp107. Residues 132 to 135 (AGGA), 155 to 158 (NRKD), Lys205, 232 to 235 (CVYN), and Gly255 each bind NAD(+).

Belongs to the shikimate dehydrogenase family. As to quaternary structure, homodimer.

It carries out the reaction L-quinate + NAD(+) = 3-dehydroquinate + NADH + H(+). The catalysed reaction is L-quinate + NADP(+) = 3-dehydroquinate + NADPH + H(+). It catalyses the reaction shikimate + NADP(+) = 3-dehydroshikimate + NADPH + H(+). The enzyme catalyses shikimate + NAD(+) = 3-dehydroshikimate + NADH + H(+). It functions in the pathway metabolic intermediate biosynthesis; chorismate biosynthesis; chorismate from D-erythrose 4-phosphate and phosphoenolpyruvate: step 4/7. Its function is as follows. The actual biological function of YdiB remains unclear, nor is it known whether 3-dehydroshikimate or quinate represents the natural substrate. Catalyzes the reversible NAD-dependent reduction of both 3-dehydroshikimate (DHSA) and 3-dehydroquinate to yield shikimate (SA) and quinate, respectively. It can use both NAD or NADP for catalysis, however it has higher catalytic efficiency with NAD. The protein is Quinate/shikimate dehydrogenase of Salmonella agona (strain SL483).